A 246-amino-acid polypeptide reads, in one-letter code: uncharacterized protein (246 aa).

It belongs to the BtpA family.

This is an uncharacterized protein from Archaeoglobus fulgidus (strain ATCC 49558 / DSM 4304 / JCM 9628 / NBRC 100126 / VC-16).